A 427-amino-acid chain; its full sequence is Cyclic 2,3-diphosphoglycerate synthetase (427 aa).

This sequence belongs to the cyclic 2,3-diphosphoglycerate synthetase family.

Its subcellular location is the cytoplasm. It catalyses the reaction (2R)-2,3-bisphosphoglycerate + ATP + H(+) = cyclic (2R)-2,3-bisphosphoglycerate + ADP + phosphate. Catalyzes the formation of cyclic 2,3-diphosphoglycerate (cDPG) by formation of an intramolecular phosphoanhydride bond at the expense of ATP. The sequence is that of Cyclic 2,3-diphosphoglycerate synthetase from Pyrococcus abyssi (strain GE5 / Orsay).